The sequence spans 168 residues: Phosphopantetheine adenylyltransferase (168 aa).

Serine 8 lines the substrate pocket. ATP is bound by residues 8 to 9 (SF) and histidine 16. Residues lysine 40, alanine 72, and arginine 86 each coordinate substrate. ATP contacts are provided by residues 87-89 (GLR), glutamate 97, and 122-128 (YSFLSSS).

It belongs to the bacterial CoaD family. Homohexamer. Requires Mg(2+) as cofactor.

Its subcellular location is the cytoplasm. The enzyme catalyses (R)-4'-phosphopantetheine + ATP + H(+) = 3'-dephospho-CoA + diphosphate. It participates in cofactor biosynthesis; coenzyme A biosynthesis; CoA from (R)-pantothenate: step 4/5. Its function is as follows. Reversibly transfers an adenylyl group from ATP to 4'-phosphopantetheine, yielding dephospho-CoA (dPCoA) and pyrophosphate. The chain is Phosphopantetheine adenylyltransferase from Trichodesmium erythraeum (strain IMS101).